Reading from the N-terminus, the 156-residue chain is 6,7-dimethyl-8-ribityllumazine synthase (156 aa).

5-amino-6-(D-ribitylamino)uracil is bound by residues Phe-23, Ala-57–Glu-59, and Ala-81–Ile-83. Residue Gly-86–Thr-87 participates in (2S)-2-hydroxy-3-oxobutyl phosphate binding. Residue His-89 is the Proton donor of the active site. Phe-114 contributes to the 5-amino-6-(D-ribitylamino)uracil binding site. Arg-128 is a binding site for (2S)-2-hydroxy-3-oxobutyl phosphate.

The protein belongs to the DMRL synthase family.

It catalyses the reaction (2S)-2-hydroxy-3-oxobutyl phosphate + 5-amino-6-(D-ribitylamino)uracil = 6,7-dimethyl-8-(1-D-ribityl)lumazine + phosphate + 2 H2O + H(+). The protein operates within cofactor biosynthesis; riboflavin biosynthesis; riboflavin from 2-hydroxy-3-oxobutyl phosphate and 5-amino-6-(D-ribitylamino)uracil: step 1/2. Functionally, catalyzes the formation of 6,7-dimethyl-8-ribityllumazine by condensation of 5-amino-6-(D-ribitylamino)uracil with 3,4-dihydroxy-2-butanone 4-phosphate. This is the penultimate step in the biosynthesis of riboflavin. The polypeptide is 6,7-dimethyl-8-ribityllumazine synthase (Helicobacter pylori (strain HPAG1)).